Here is a 141-residue protein sequence, read N- to C-terminus: Putative pre-16S rRNA nuclease (141 aa).

Belongs to the YqgF nuclease family.

Its subcellular location is the cytoplasm. In terms of biological role, could be a nuclease involved in processing of the 5'-end of pre-16S rRNA. In Aliivibrio fischeri (strain ATCC 700601 / ES114) (Vibrio fischeri), this protein is Putative pre-16S rRNA nuclease.